We begin with the raw amino-acid sequence, 329 residues long: DNA-directed RNA polymerase subunit alpha (329 aa).

Residues 1-234 (MQGSVTEFLK…EQLDAFVELR (234 aa)) are alpha N-terminal domain (alpha-NTD). Residues 248–329 (FDPILLRPVD…WPPASLADDL (82 aa)) form an alpha C-terminal domain (alpha-CTD) region.

Belongs to the RNA polymerase alpha chain family. In terms of assembly, homodimer. The RNAP catalytic core consists of 2 alpha, 1 beta, 1 beta' and 1 omega subunit. When a sigma factor is associated with the core the holoenzyme is formed, which can initiate transcription.

The catalysed reaction is RNA(n) + a ribonucleoside 5'-triphosphate = RNA(n+1) + diphosphate. Functionally, DNA-dependent RNA polymerase catalyzes the transcription of DNA into RNA using the four ribonucleoside triphosphates as substrates. This Shewanella amazonensis (strain ATCC BAA-1098 / SB2B) protein is DNA-directed RNA polymerase subunit alpha.